The chain runs to 377 residues: Lactosylceramide 1,3-N-acetyl-beta-D-glucosaminyltransferase A (377 aa).

The Cytoplasmic segment spans residues 1–12 (MLISARRLRRCQ). Residues 13-30 (FLQLLASCFVLSLMALLV) form a helical; Signal-anchor for type II membrane protein membrane-spanning segment. Over 31–377 (QEDNSLISHV…DTYPCSAAWS (347 aa)) the chain is Lumenal. N-linked (GlcNAc...) asparagine glycans are attached at residues asparagine 56, asparagine 167, and asparagine 275.

This sequence belongs to the glycosyltransferase 31 family.

It localises to the golgi apparatus membrane. It catalyses the reaction a beta-D-Gal-(1-&gt;4)-beta-D-Glc-(1&lt;-&gt;1)-Cer(d18:1(4E)) + UDP-N-acetyl-alpha-D-glucosamine = a beta-D-GlcNAc-(1-&gt;3)-beta-D-Gal-(1-&gt;4)-beta-D-Glc-(1&lt;-&gt;1)-Cer(d18:1(4E)) + UDP + H(+). It carries out the reaction a neolactoside nLc4Cer(d18:1(4E)) + UDP-N-acetyl-alpha-D-glucosamine = a neolactoside IV(3)-beta-GlcNAc-nLc4Cer(d18:1(4E)) + UDP + H(+). The protein operates within protein modification; protein glycosylation. Functionally, beta-1,3-N-acetylglucosaminyltransferase that plays a key role in the synthesis of lacto- or neolacto-series carbohydrate chains on glycolipids. The protein is Lactosylceramide 1,3-N-acetyl-beta-D-glucosaminyltransferase A (b3gnt5-a) of Xenopus laevis (African clawed frog).